The primary structure comprises 111 residues: High mobility group protein Z (111 aa).

The HMG box DNA-binding region spans 6–72; that stretch reads PKRPLSAYML…EYNKAVKEYE (67 aa). S11 carries the phosphoserine modification. Residues 72 to 111 are disordered; it reads EANGGTDSGAPKKRKKAAAKPAKKAKKKESSEEEEEDESE. Basic residues predominate over residues 82–98; sequence PKKRKKAAAKPAKKAKK. Residues 102 to 111 show a composition bias toward acidic residues; that stretch reads SEEEEEDESE.

This sequence belongs to the HMGB family.

The protein localises to the nucleus. It is found in the chromosome. The chain is High mobility group protein Z (HmgZ) from Drosophila melanogaster (Fruit fly).